The following is a 402-amino-acid chain: Protein DesVIII (402 aa).

This sequence belongs to the cytochrome P450 family. In terms of assembly, forms a complex with DesVII.

It functions in the pathway antibiotic biosynthesis. Involved in the biosynthesis of the macrolide antibiotics methymycin, neomethymycin, narbomycin, and pikromycin. DesVIII assists the folding of the DesVII polypeptide. However, unlike chaperones, it remains bound to DesVII during catalysis, forming a tight DesVII/DesVIII complex. Although the formation of the DesVII/DesVIII complex is essential for the catalytic activity, DesVIII is unlikely to be involved in catalysis directly. This Streptomyces venezuelae protein is Protein DesVIII.